Here is a 291-residue protein sequence, read N- to C-terminus: Nucleotide-binding protein lin2617 (291 aa).

An ATP-binding site is contributed by 13 to 20; the sequence is GMSGAGKT. Residue 63-66 coordinates GTP; the sequence is DLRG.

Belongs to the RapZ-like family.

Functionally, displays ATPase and GTPase activities. The chain is Nucleotide-binding protein lin2617 from Listeria innocua serovar 6a (strain ATCC BAA-680 / CLIP 11262).